The following is a 156-amino-acid chain: Superoxide dismutase [Cu-Zn] 2 (156 aa).

3 residues coordinate Cu cation: His47, His49, and His64. A disulfide bond links Cys58 and Cys147. Zn(2+)-binding residues include His64, His72, His81, and Asp84. His121 contacts Cu cation.

It belongs to the Cu-Zn superoxide dismutase family. In terms of assembly, homodimer. It depends on Cu cation as a cofactor. Zn(2+) serves as cofactor.

It localises to the cytoplasm. It catalyses the reaction 2 superoxide + 2 H(+) = H2O2 + O2. Functionally, destroys radicals which are normally produced within the cells and which are toxic to biological systems. The chain is Superoxide dismutase [Cu-Zn] 2 (SODCC.2) from Mesembryanthemum crystallinum (Common ice plant).